Consider the following 367-residue polypeptide: Alanine racemase (367 aa).

Residue K40 is the Proton acceptor; specific for D-alanine of the active site. The residue at position 40 (K40) is an N6-(pyridoxal phosphate)lysine. Residue R136 participates in substrate binding. The Proton acceptor; specific for L-alanine role is filled by Y263. A substrate-binding site is contributed by M310.

The protein belongs to the alanine racemase family. Pyridoxal 5'-phosphate serves as cofactor.

The enzyme catalyses L-alanine = D-alanine. The protein operates within amino-acid biosynthesis; D-alanine biosynthesis; D-alanine from L-alanine: step 1/1. In terms of biological role, catalyzes the interconversion of L-alanine and D-alanine. May also act on other amino acids. This Lactococcus lactis subsp. cremoris (strain SK11) protein is Alanine racemase (alr).